A 949-amino-acid polypeptide reads, in one-letter code: Glycine dehydrogenase (decarboxylating) (949 aa).

Lysine 702 is subject to N6-(pyridoxal phosphate)lysine.

This sequence belongs to the GcvP family. In terms of assembly, the glycine cleavage system is composed of four proteins: P, T, L and H. Pyridoxal 5'-phosphate is required as a cofactor.

The enzyme catalyses N(6)-[(R)-lipoyl]-L-lysyl-[glycine-cleavage complex H protein] + glycine + H(+) = N(6)-[(R)-S(8)-aminomethyldihydrolipoyl]-L-lysyl-[glycine-cleavage complex H protein] + CO2. The glycine cleavage system catalyzes the degradation of glycine. The P protein binds the alpha-amino group of glycine through its pyridoxal phosphate cofactor; CO(2) is released and the remaining methylamine moiety is then transferred to the lipoamide cofactor of the H protein. In Rhodococcoides fascians (Rhodococcus fascians), this protein is Glycine dehydrogenase (decarboxylating).